Consider the following 287-residue polypeptide: Damage-control phosphatase PH1575 (287 aa).

The Subfamily I CxxC motif signature appears at C7 to C10. Residues D156, N157, and D191 each contribute to the Mn(2+) site. Positions G243 to E246 match the Subfamily I GNFE motif motif. Positions K263–C264 match the Subfamily I KC motif motif.

It belongs to the damage-control phosphatase family. Nucleotides phosphatase I subfamily. Mn(2+) is required as a cofactor. Ni(2+) serves as cofactor. The cofactor is [2Fe-2S] cluster.

Its activity is regulated as follows. Activity is strongly promoted by Co(2+), Ni(2+), Mg(2+), Mn(2+), Ca(2+), Zn(2+) and Cu(2+). Activity is inhibited by EDTA. In terms of biological role, metal-dependent phosphatase with probable damage-control functions. Shows phosphatase activity against p-nitrophenyl phosphate (pNPP), but natural substrates have not been identified yet. Low phosphatase activity against 8-oxo nucleotides suggests that it could hydrolyze oxidatively damaged purine nucleotides or their biosynthetic intermediates. The chain is Damage-control phosphatase PH1575 from Pyrococcus horikoshii (strain ATCC 700860 / DSM 12428 / JCM 9974 / NBRC 100139 / OT-3).